The following is a 146-amino-acid chain: Large ribosomal subunit protein uL15 (146 aa).

The disordered stretch occupies residues 1–54 (MKLHELQPAAGSRKAPKRVGRGTGSGLGRNAGKGEKGQNARSGGGVRPGFEGGQ). Composition is skewed to gly residues over residues 21-31 (RGTGSGLGRNA) and 42-52 (SGGGVRPGFEG).

The protein belongs to the universal ribosomal protein uL15 family. In terms of assembly, part of the 50S ribosomal subunit.

Binds to the 23S rRNA. In Clostridium botulinum (strain Eklund 17B / Type B), this protein is Large ribosomal subunit protein uL15.